A 431-amino-acid chain; its full sequence is Histidinol dehydrogenase (431 aa).

NAD(+) contacts are provided by Y127, Q189, and N212. S237, Q259, and H262 together coordinate substrate. Zn(2+) is bound by residues Q259 and H262. Residues E326 and H327 each act as proton acceptor in the active site. Positions 327, 360, 414, and 419 each coordinate substrate. Position 360 (D360) interacts with Zn(2+). H419 lines the Zn(2+) pocket.

Belongs to the histidinol dehydrogenase family. It depends on Zn(2+) as a cofactor.

The catalysed reaction is L-histidinol + 2 NAD(+) + H2O = L-histidine + 2 NADH + 3 H(+). The protein operates within amino-acid biosynthesis; L-histidine biosynthesis; L-histidine from 5-phospho-alpha-D-ribose 1-diphosphate: step 9/9. Catalyzes the sequential NAD-dependent oxidations of L-histidinol to L-histidinaldehyde and then to L-histidine. The polypeptide is Histidinol dehydrogenase (Xanthomonas campestris pv. campestris (strain 8004)).